Reading from the N-terminus, the 467-residue chain is Cysteine--tRNA ligase (467 aa).

C27 lines the Zn(2+) pocket. Positions 29–39 match the 'HIGH' region motif; sequence PTVYNYIHIGN. Zn(2+)-binding residues include C207, H232, and E236. Residues 264–268 carry the 'KMSKS' region motif; the sequence is KMSKS. K267 provides a ligand contact to ATP.

It belongs to the class-I aminoacyl-tRNA synthetase family. In terms of assembly, monomer. The cofactor is Zn(2+).

It is found in the cytoplasm. It catalyses the reaction tRNA(Cys) + L-cysteine + ATP = L-cysteinyl-tRNA(Cys) + AMP + diphosphate. The chain is Cysteine--tRNA ligase from Caldanaerobacter subterraneus subsp. tengcongensis (strain DSM 15242 / JCM 11007 / NBRC 100824 / MB4) (Thermoanaerobacter tengcongensis).